Consider the following 94-residue polypeptide: ATP-dependent Clp protease adapter protein ClpS (94 aa).

Belongs to the ClpS family. In terms of assembly, binds to the N-terminal domain of the chaperone ClpA.

Involved in the modulation of the specificity of the ClpAP-mediated ATP-dependent protein degradation. In Thermosynechococcus vestitus (strain NIES-2133 / IAM M-273 / BP-1), this protein is ATP-dependent Clp protease adapter protein ClpS.